We begin with the raw amino-acid sequence, 31 residues long: Basic phospholipase A2 13 (31 aa).

Belongs to the phospholipase A2 family. Group I subfamily. It depends on Ca(2+) as a cofactor. As to expression, expressed by the venom gland.

It localises to the secreted. It carries out the reaction a 1,2-diacyl-sn-glycero-3-phosphocholine + H2O = a 1-acyl-sn-glycero-3-phosphocholine + a fatty acid + H(+). In terms of biological role, snake venom phospholipase A2 (PLA2) that inhibits neuromuscular transmission by blocking acetylcholine release from the nerve termini. PLA2 catalyzes the calcium-dependent hydrolysis of the 2-acyl groups in 3-sn-phosphoglycerides. This is Basic phospholipase A2 13 from Bungarus fasciatus (Banded krait).